A 130-amino-acid polypeptide reads, in one-letter code: Histone H2B.1 (130 aa).

A compositionally biased stretch (basic and acidic residues) spans 1–19; that stretch reads MAPKAEKKPASKAPAEKKP. The segment at 1–39 is disordered; that stretch reads MAPKAEKKPASKAPAEKKPAAKKTASATGTKKRSKTRKE. An N6-acetyllysine; alternate mark is found at K7 and K8. Residues K7 and K8 each participate in a glycyl lysine isopeptide (Lys-Gly) (interchain with G-Cter in SUMO); alternate cross-link. S11 bears the Phosphoserine mark. K12 carries the N6-acetyllysine modification. At K17 the chain carries N6-acetyllysine; alternate. K17 participates in a covalent cross-link: Glycyl lysine isopeptide (Lys-Gly) (interchain with G-Cter in SUMO); alternate. K18 is covalently cross-linked (Glycyl lysine isopeptide (Lys-Gly) (interchain with G-Cter in SUMO)). K124 participates in a covalent cross-link: Glycyl lysine isopeptide (Lys-Gly) (interchain with G-Cter in ubiquitin).

Belongs to the histone H2B family. In terms of assembly, the nucleosome is a histone octamer containing two molecules each of H2A, H2B, H3 and H4 assembled in one H3-H4 heterotetramer and two H2A-H2B heterodimers. The octamer wraps approximately 147 bp of DNA. Monoubiquitinated by the UBC2-BRE1 complex to form H2BK123ub1. H2BK123ub1 gives a specific tag for epigenetic transcriptional activation and is also prerequisite for H3K4me and H3K79me formation. H2BK123ub1 also modulates the formation of double-strand breaks during meiosis and is a prerequisite for DNA-damage checkpoint activation. In terms of processing, phosphorylated by STE20 to form H2BS10ph during progression through meiotic prophase. May be correlated with chromosome condensation. Post-translationally, acetylated by GCN5 to form H2BK11ac and H2BK16ac. H2BK16ac can also be formed by ESA1. Acetylation of N-terminal lysines and particularly formation of H2BK11acK16ac has a positive effect on transcription. Sumoylation to form H2BK6su or H2BK7su, and probably also H2BK16su or H2BK17su, occurs preferentially near the telomeres and represses gene transcription.

It localises to the nucleus. The protein resides in the chromosome. Core component of nucleosome. Nucleosomes wrap and compact DNA into chromatin, limiting DNA accessibility to the cellular machineries which require DNA as a template. Histones thereby play a central role in transcription regulation, DNA repair, DNA replication and chromosomal stability. DNA accessibility is regulated via a complex set of post-translational modifications of histones, also called histone code, and nucleosome remodeling. The sequence is that of Histone H2B.1 (HTB1) from Debaryomyces hansenii (strain ATCC 36239 / CBS 767 / BCRC 21394 / JCM 1990 / NBRC 0083 / IGC 2968) (Yeast).